The primary structure comprises 249 residues: DnaJ homolog subfamily C member 5 homolog (249 aa).

The residue at position 12 (Ser-12) is a Phosphoserine. At Thr-13 the chain carries Phosphothreonine. Phosphoserine occurs at positions 14 and 17. The region spanning 15–84 is the J domain; that stretch reads GDSLYEILGL…RNIYDNYGSL (70 aa). Phosphotyrosine is present on Tyr-19. Basic and acidic residues predominate over residues 146–162; that stretch reads HDQYSHLNRPDGNREGN. Disordered regions lie at residues 146 to 177 and 218 to 249; these read HDQY…LEDV and PFTG…NQKY. The segment covering 227-241 has biased composition (polar residues); it reads NENTSLNTTEQTTYT.

Fatty acylated. Heavily palmitoylated in the cysteine string motif. In terms of tissue distribution, expressed in wide range of synaptic terminals: embryonic nervous system, larval neuromuscular junctions, adult visual system (neuropil of optic ganglia and terminal of R1-8 photoreceptors) and thoracic neuromuscular junctions. Also expressed in non-neuronal cells: follicle cells, spermatheca, testis and ejaculatory bulb. Low level of expression is found in many neuronal and non-neuronal tissues.

Its subcellular location is the membrane. May have an important role in presynaptic function. The polypeptide is DnaJ homolog subfamily C member 5 homolog (Drosophila melanogaster (Fruit fly)).